A 609-amino-acid polypeptide reads, in one-letter code: Chloride channel CLIC-like protein 1 (609 aa).

Positions 1-25 are cleaved as a signal peptide; sequence MKLSSSSSFGLCILVVFFCFVVIES. A run of 3 helical transmembrane segments spans residues 212–235, 241–260, and 358–380; these read VSLIVLIIVAIICTQLWSVVSWFV, FAVSFFISLIWNWFHLYMLA, and VTLQIPVLIIIILAILIFVYGSA. Residues 398 to 553 are disordered; it reads EQPPPAVGQR…PSSIDVKTVG (156 aa). Composition is skewed to basic and acidic residues over residues 454–474 and 507–537; these read ENREEDRSMDIRQEFSTKRTP and EEVKVEEKEKKESFSVDNKEQKETKSPDRSE. Over residues 538–547 the composition is skewed to low complexity; sequence PITSEPPSSI.

Belongs to the chloride channel MCLC family. Expressed in the hindbrain, swim bladder and the eye at 1 day post fertilization (dpf) with increased expression at 3 dpf. At 3 dpf, most prominent expression in the retina, with strong expression in the ganglion cell layer, outer nuclear layer and the retinal pigmented epithelium.

Its subcellular location is the endoplasmic reticulum membrane. The protein localises to the golgi apparatus membrane. It localises to the nucleus membrane. Seems to act as a chloride ion channel. Plays a role in retina development. In Danio rerio (Zebrafish), this protein is Chloride channel CLIC-like protein 1.